Consider the following 484-residue polypeptide: Probable receptor-like protein kinase At5g18500 (484 aa).

The chain crosses the membrane as a helical span at residues 21–41 (IIVIVLSAIFVVVLAISLWLT). A disordered region spans residues 72-135 (RVDEVSSSNG…SVSSANPLTA (64 aa)). Over residues 91-105 (KFGDKEPEKGIKAES) the composition is skewed to basic and acidic residues. Residues 125–134 (SSVSSANPLT) are compositionally biased toward polar residues. The residue at position 155 (T155) is a Phosphothreonine. The Protein kinase domain occupies 166 to 445 (FSRDNIIGDG…MLESEEYPIA (280 aa)). Residues 172-180 (IGDGGYGVV) and K194 contribute to the ATP site. Y239 is modified (phosphotyrosine). D292 functions as the Proton acceptor in the catalytic mechanism. S296 bears the Phosphoserine mark. A phosphothreonine mark is found at T326 and T331. Residue Y339 is modified to Phosphotyrosine. The disordered stretch occupies residues 425–484 (EKRPRMSQVARMLESEEYPIAREDRRRRRSQNGTTRDSDPPRNSTDTDKSEYHDLKPEGG). The segment covering 460 to 484 (RDSDPPRNSTDTDKSEYHDLKPEGG) has biased composition (basic and acidic residues).

Belongs to the protein kinase superfamily. Ser/Thr protein kinase family.

It is found in the cell membrane. The enzyme catalyses L-seryl-[protein] + ATP = O-phospho-L-seryl-[protein] + ADP + H(+). It catalyses the reaction L-threonyl-[protein] + ATP = O-phospho-L-threonyl-[protein] + ADP + H(+). The polypeptide is Probable receptor-like protein kinase At5g18500 (Arabidopsis thaliana (Mouse-ear cress)).